We begin with the raw amino-acid sequence, 121 residues long: Small ribosomal subunit protein bS6 (121 aa).

It belongs to the bacterial ribosomal protein bS6 family.

Binds together with bS18 to 16S ribosomal RNA. This Rickettsia felis (strain ATCC VR-1525 / URRWXCal2) (Rickettsia azadi) protein is Small ribosomal subunit protein bS6.